The following is a 157-amino-acid chain: MKEKGRKVIATNRKARHNYTILDVYEAGIALVGTEVKSLREGKASLVDAFATVDDGEVWLRSLHIPEYTQGTWTNHAPRRTRKLLLHKQEIEHLVGKTREGNQTLVPLSMYFSDGKVKVELALAKGKQDYDKRQDLARRTAEREVTRELGRRVKGMR.

It belongs to the SmpB family.

The protein resides in the cytoplasm. In terms of biological role, required for rescue of stalled ribosomes mediated by trans-translation. Binds to transfer-messenger RNA (tmRNA), required for stable association of tmRNA with ribosomes. tmRNA and SmpB together mimic tRNA shape, replacing the anticodon stem-loop with SmpB. tmRNA is encoded by the ssrA gene; the 2 termini fold to resemble tRNA(Ala) and it encodes a 'tag peptide', a short internal open reading frame. During trans-translation Ala-aminoacylated tmRNA acts like a tRNA, entering the A-site of stalled ribosomes, displacing the stalled mRNA. The ribosome then switches to translate the ORF on the tmRNA; the nascent peptide is terminated with the 'tag peptide' encoded by the tmRNA and targeted for degradation. The ribosome is freed to recommence translation, which seems to be the essential function of trans-translation. This is SsrA-binding protein from Rhodococcus jostii (strain RHA1).